The following is a 437-amino-acid chain: Protein PhoH2 (437 aa).

The PINc domain maps to 7–134 (RTYVLDTSVL…LVSKDIPLRV (128 aa)).

This sequence in the N-terminal section; belongs to the PINc/VapC protein family. It in the C-terminal section; belongs to the PhoH family. Interacts with antitoxin PhoAT. Requires Mg(2+) as cofactor.

The catalysed reaction is n ATP + n H2O + wound RNA = n ADP + n phosphate + unwound RNA.. It catalyses the reaction ATP + H2O = ADP + phosphate + H(+). The enzyme catalyses GTP + H2O = GDP + phosphate + H(+). In terms of biological role, toxic component of a type II toxin-antitoxin (TA) system. The possible cognate antitoxin is PhoAT; the toxin gene can be expressed in the absence of the antitoxin gene in an endogenous mc(2)155 double deletion. Unwinds and/or cleaves 5'-tailed RNA in vitro that starts with 5'-AC, the reaction requires hydrolyzable ATP; double-stranded (ds)RNA and dsDNA are not unwound or cleaved. Has ATPase and GTPase activities. The polypeptide is Protein PhoH2 (Mycolicibacterium smegmatis (strain ATCC 700084 / mc(2)155) (Mycobacterium smegmatis)).